The chain runs to 131 residues: Small ribosomal subunit protein uS8 (131 aa).

The protein belongs to the universal ribosomal protein uS8 family. As to quaternary structure, part of the 30S ribosomal subunit. Contacts proteins S5 and S12.

Functionally, one of the primary rRNA binding proteins, it binds directly to 16S rRNA central domain where it helps coordinate assembly of the platform of the 30S subunit. The polypeptide is Small ribosomal subunit protein uS8 (Ralstonia nicotianae (strain ATCC BAA-1114 / GMI1000) (Ralstonia solanacearum)).